The following is a 480-amino-acid chain: ATP synthase subunit beta (480 aa).

Residue 153–160 (GGAGVGKT) coordinates ATP.

The protein belongs to the ATPase alpha/beta chains family. F-type ATPases have 2 components, CF(1) - the catalytic core - and CF(0) - the membrane proton channel. CF(1) has five subunits: alpha(3), beta(3), gamma(1), delta(1), epsilon(1). CF(0) has three main subunits: a(1), b(2) and c(9-12). The alpha and beta chains form an alternating ring which encloses part of the gamma chain. CF(1) is attached to CF(0) by a central stalk formed by the gamma and epsilon chains, while a peripheral stalk is formed by the delta and b chains.

It localises to the cell membrane. The catalysed reaction is ATP + H2O + 4 H(+)(in) = ADP + phosphate + 5 H(+)(out). Produces ATP from ADP in the presence of a proton gradient across the membrane. The catalytic sites are hosted primarily by the beta subunits. This Lactobacillus gasseri (strain ATCC 33323 / DSM 20243 / BCRC 14619 / CIP 102991 / JCM 1131 / KCTC 3163 / NCIMB 11718 / NCTC 13722 / AM63) protein is ATP synthase subunit beta.